Consider the following 604-residue polypeptide: MMRAVWEALAALAAVACLVGAVRGGPGLSMFAGQAAQPDPCSDENGHPRRCIPDFVNAAFGKDVRVSSTCGRPPARYCVVSERGEERLRSCHLCNASDPKKAHPPAFLTDLNNPHNLTCWQSENYLQFPHNVTLTLSLGKKFEVTYVSLQFCSPRPESMAIYKSMDYGRTWVPFQFYSTQCRKMYNRPHRAPITKQNEQEAVCTDSHTDMRPLSGGLIAFSTLDGRPSAHDFDNSPVLQDWVTATDIRVAFSRLHTFGDENEDDSELARDSYFYAVSDLQVGGRCKCNGHAARCVRDRDDSLVCDCRHNTAGPECDRCKPFHYDRPWQRATAREANECVACNCNLHARRCRFNMELYKLSGRKSGGVCLNCRHNTAGRHCHYCKEGYYRDMGKPITHRKACKACDCHPVGAAGKTCNQTTGQCPCKDGVTGITCNRCAKGYQQSRSPIAPCIKIPVAPPTTAASSVEEPEDCDSYCKASKGKLKINMKKYCKKDYAVQIHILKADKAGDWWKFTVNIISVYKQGTSRIRRGDQSLWIRSRDIACKCPKIKPLKKYLLLGNAEDSPDQSGIVADKSSLVIQWRDTWARRLRKFQQREKKGKCKKA.

The signal sequence occupies residues M1 to G24. In terms of domain architecture, Laminin N-terminal spans H47–R284. N-linked (GlcNAc...) asparagine glycans are attached at residues N95, N116, and N131. 15 disulfides stabilise this stretch: C119–C152, C285–C294, C287–C304, C306–C315, C318–C338, C341–C350, C343–C368, C371–C380, C383–C401, C404–C416, C406–C423, C425–C434, C437–C451, C472–C544, and C491–C601. 3 consecutive Laminin EGF-like domains span residues C285 to A340, C341 to A403, and C404 to K453. The N-linked (GlcNAc...) asparagine glycan is linked to N417. The NTR domain maps to C472–C601. A Cell attachment site motif is present at residues R530–D532.

As to quaternary structure, binds to its receptors; DCC, UNC5A, UNC5B, UNC5C and probably UNC5D. Binds to its receptor; DSCAM. Interacts with DCC. Interacts with APP. In terms of tissue distribution, widely expressed in normal adult tissues with highest levels in heart, small intestine, colon, liver and prostate. Reduced expression in brain tumors and neuroblastomas. Expressed in epididymis (at protein level).

The protein resides in the secreted. It localises to the cytoplasm. In terms of biological role, netrins control guidance of CNS commissural axons and peripheral motor axons. Its association with either DCC or some UNC5 receptors will lead to axon attraction or repulsion, respectively. Binding to UNC5C might cause dissociation of UNC5C from polymerized TUBB3 in microtubules and thereby lead to increased microtubule dynamics and axon repulsion. Involved in dorsal root ganglion axon projection towards the spinal cord. It also serves as a survival factor via its association with its receptors which prevent the initiation of apoptosis. Involved in tumorigenesis by regulating apoptosis. The polypeptide is Netrin-1 (NTN1) (Homo sapiens (Human)).